The sequence spans 231 residues: 2-C-methyl-D-erythritol 4-phosphate cytidylyltransferase (231 aa).

It belongs to the IspD/TarI cytidylyltransferase family. IspD subfamily.

It carries out the reaction 2-C-methyl-D-erythritol 4-phosphate + CTP + H(+) = 4-CDP-2-C-methyl-D-erythritol + diphosphate. Its pathway is isoprenoid biosynthesis; isopentenyl diphosphate biosynthesis via DXP pathway; isopentenyl diphosphate from 1-deoxy-D-xylulose 5-phosphate: step 2/6. Functionally, catalyzes the formation of 4-diphosphocytidyl-2-C-methyl-D-erythritol from CTP and 2-C-methyl-D-erythritol 4-phosphate (MEP). This Xylella fastidiosa (strain 9a5c) protein is 2-C-methyl-D-erythritol 4-phosphate cytidylyltransferase.